We begin with the raw amino-acid sequence, 64 residues long: Disintegrin (64 aa).

Positions 1–64 (NSVHPCCDPV…SDCPRNRYNH (64 aa)) constitute a Disintegrin domain. Intrachain disulfides connect Cys-6–Cys-29, Cys-20–Cys-26, Cys-25–Cys-50, and Cys-38–Cys-57. The short motif at 42-44 (MLD) is the Cell attachment site; atypical (MLD) element.

This sequence belongs to the disintegrin family. Dimeric disintegrin subfamily. In terms of assembly, heterodimer; disulfide-linked. Expressed by the venom gland.

The protein resides in the secreted. In terms of biological role, inhibits adhesion of cells expressing alpha-4/beta-1 (ITGA4/ITGB1) and alpha-4/beta-7 (ITGA4/ITGB7) integrins to the natural ligands vascular cell adhesion molecule 1 (VCAM-1) and mucosal addressin cell adhesion molecule 1 (MADCAM-1). The polypeptide is Disintegrin (Echis carinatus (Saw-scaled viper)).